A 406-amino-acid chain; its full sequence is GTPase Obg (406 aa).

The Obg domain occupies Met1–Leu159. Residues Asn127–Glu148 form a disordered region. Polar residues predominate over residues Arg129–Pro143. The region spanning Ala160–Asp334 is the OBG-type G domain. Residues Gly166–Ser173, Phe191–Val195, Asp213–Gly216, Asn283–Asp286, and Ser315–Leu317 each bind GTP. 2 residues coordinate Mg(2+): Ser173 and Thr193. A disordered region spans residues Gly378 to Pro406. Residues Ala385–Gly399 show a composition bias toward acidic residues.

This sequence belongs to the TRAFAC class OBG-HflX-like GTPase superfamily. OBG GTPase family. Monomer. Requires Mg(2+) as cofactor.

Its subcellular location is the cytoplasm. In terms of biological role, an essential GTPase which binds GTP, GDP and possibly (p)ppGpp with moderate affinity, with high nucleotide exchange rates and a fairly low GTP hydrolysis rate. Plays a role in control of the cell cycle, stress response, ribosome biogenesis and in those bacteria that undergo differentiation, in morphogenesis control. This chain is GTPase Obg, found in Pseudomonas paraeruginosa (strain DSM 24068 / PA7) (Pseudomonas aeruginosa (strain PA7)).